Reading from the N-terminus, the 506-residue chain is Kynurenine 3-monooxygenase (506 aa).

Positions 153 to 175 are disordered; sequence QETSLLPGEESEKDKKQNTEDED. Basic and acidic residues predominate over residues 162–171; it reads ESEKDKKQNT.

Belongs to the aromatic-ring hydroxylase family. KMO subfamily. The cofactor is FAD.

Its subcellular location is the mitochondrion outer membrane. It carries out the reaction L-kynurenine + NADPH + O2 + H(+) = 3-hydroxy-L-kynurenine + NADP(+) + H2O. It functions in the pathway cofactor biosynthesis; NAD(+) biosynthesis; quinolinate from L-kynurenine: step 1/3. Catalyzes the hydroxylation of L-kynurenine (L-Kyn) to form 3-hydroxy-L-kynurenine (L-3OHKyn). Required for synthesis of quinolinic acid. The chain is Kynurenine 3-monooxygenase from Cryptococcus neoformans var. neoformans serotype D (strain B-3501A) (Filobasidiella neoformans).